Reading from the N-terminus, the 376-residue chain is Cell adhesion molecule CEACAM18 (376 aa).

The signal sequence occupies residues 1–30; sequence MDFSRPSFSPWRWLTLVASLLTCGICQASG. The Extracellular segment spans residues 31-330; sequence QIFISPDSLL…PLPTVNRELY (300 aa). Residues N69, N95, and N110 are each glycosylated (N-linked (GlcNAc...) asparagine). The Ig-like C2-type domain occupies 229 to 314; the sequence is PDYVSLWTQP…TQLTFYRDVT (86 aa). Cysteines 257 and 298 form a disulfide. Residues 331–351 form a helical membrane-spanning segment; that stretch reads IPGPLVIFLILLTSLGGAFVC. Residues 352–376 are Cytoplasmic-facing; it reads RVLVYSLFQSCSRGKTCHKCPWQTN.

It belongs to the immunoglobulin superfamily. CEA family. Mostly expressed in the small and large intestine and at lower levels also in other organs.

It is found in the membrane. The chain is Cell adhesion molecule CEACAM18 from Mus musculus (Mouse).